The following is a 968-amino-acid chain: RNA polymerase-associated protein RapA (968 aa).

A Helicase ATP-binding domain is found at 164–334 (DVGRRHAPRV…FARLRLLDPN (171 aa)). An ATP-binding site is contributed by 177–184 (DEVGLGKT). A DEAH box motif is present at residues 280 to 283 (DEAH). The region spanning 490–662 (RVEWLMGYLT…YLASPVQTEG (173 aa)) is the Helicase C-terminal domain.

It belongs to the SNF2/RAD54 helicase family. RapA subfamily. In terms of assembly, interacts with the RNAP. Has a higher affinity for the core RNAP than for the holoenzyme. Its ATPase activity is stimulated by binding to RNAP.

Functionally, transcription regulator that activates transcription by stimulating RNA polymerase (RNAP) recycling in case of stress conditions such as supercoiled DNA or high salt concentrations. Probably acts by releasing the RNAP, when it is trapped or immobilized on tightly supercoiled DNA. Does not activate transcription on linear DNA. Probably not involved in DNA repair. This chain is RNA polymerase-associated protein RapA, found in Shigella sonnei (strain Ss046).